Reading from the N-terminus, the 121-residue chain is Large ribosomal subunit protein uL18 (121 aa).

Belongs to the universal ribosomal protein uL18 family. Part of the 50S ribosomal subunit; part of the 5S rRNA/L5/L18/L25 subcomplex. Contacts the 5S and 23S rRNAs.

This is one of the proteins that bind and probably mediate the attachment of the 5S RNA into the large ribosomal subunit, where it forms part of the central protuberance. In Mesomycoplasma hyopneumoniae (strain 232) (Mycoplasma hyopneumoniae), this protein is Large ribosomal subunit protein uL18.